We begin with the raw amino-acid sequence, 362 residues long: Vignain (362 aa).

An N-terminal signal peptide occupies residues 1 to 20; that stretch reads MATKKLLWVVLSFSLVLGVA. The propeptide at 21-131 is activation peptide; it reads NSFDFHDKDL…YEKVVSVPPS (111 aa). 3 cysteine pairs are disulfide-bonded: cysteine 149/cysteine 191, cysteine 183/cysteine 224, and cysteine 282/cysteine 334. The active site involves cysteine 152. Residues histidine 288 and asparagine 309 contribute to the active site. Residues asparagine 326 and asparagine 346 are each glycosylated (N-linked (GlcNAc...) asparagine). The Prevents secretion from ER signature appears at 359–362; sequence KDEL.

This sequence belongs to the peptidase C1 family. As to quaternary structure, monomer.

Its subcellular location is the endoplasmic reticulum lumen. Its function is as follows. Thought to be involved in the hydrolysis of stored seed proteins. In Phaseolus vulgaris (Kidney bean), this protein is Vignain.